Here is a 440-residue protein sequence, read N- to C-terminus: Rhamnogalacturonase A (440 aa).

The signal sequence occupies residues 1–18 (MRALFLLALGSIPALVSG). An intrachain disulfide couples C39 to C65. The N-linked (GlcNAc...) asparagine glycan is linked to N50. D215 functions as the Proton donor in the catalytic mechanism. A disulfide bridge connects residues C217 and C234. The active site involves H290. N317 carries an N-linked (GlcNAc...) asparagine glycan. 2 disulfides stabilise this stretch: C340/C346 and C368/C377. T385 carries O-linked (Man) threonine glycosylation. O-linked (Man) serine glycosylation is present at S386. O-linked (Man) threonine glycans are attached at residues T388, T389, and T390. A glycan (O-linked (Man) serine) is linked at S391. 2 O-linked (Man) threonine glycosylation sites follow: T392 and T394. 2 O-linked (Man) serine glycosylation sites follow: S398 and S401. 3 O-linked (Man) threonine glycosylation sites follow: T403, T404, and T416. S418 is a glycosylation site (O-linked (Man) serine). 2 O-linked (Man) threonine glycosylation sites follow: T423 and T426. Residues S427 and S436 are each glycosylated (O-linked (Man) serine).

The protein belongs to the glycosyl hydrolase 28 family. Post-translationally, the N-terminus is blocked. N-glycosylated and may also be O-glycosylated.

It localises to the secreted. The enzyme catalyses Endohydrolysis of alpha-D-GalA-(1-&gt;2)-alpha-L-Rha glycosidic bond in the rhamnogalacturonan I backbone with initial inversion of anomeric configuration releasing oligosaccharides with beta-D-GalA at the reducing end.. Its function is as follows. Pectinolytic enzymes consist of four classes of enzymes: pectine lyase, polygalacturonase, pectin methylesterase and rhamnogalacturonase. Has a positive effect in the apple hot-mash liquefaction process. Hydrolyzes alpha-D-galacturonopyranosyl-(1,2)-alpha-L-rhamnopyranosyl linkages in the backbone of the hairy regions of pectins. In Aspergillus aculeatus, this protein is Rhamnogalacturonase A (rhgA).